The sequence spans 206 residues: Small ribosomal subunit protein uS4 (206 aa).

An S4 RNA-binding domain is found at 96–157; sequence SRLDNVVYRM…KAKKQVRIQE (62 aa).

The protein belongs to the universal ribosomal protein uS4 family. As to quaternary structure, part of the 30S ribosomal subunit. Contacts protein S5. The interaction surface between S4 and S5 is involved in control of translational fidelity.

Functionally, one of the primary rRNA binding proteins, it binds directly to 16S rRNA where it nucleates assembly of the body of the 30S subunit. In terms of biological role, with S5 and S12 plays an important role in translational accuracy. This Neisseria gonorrhoeae (strain ATCC 700825 / FA 1090) protein is Small ribosomal subunit protein uS4.